The primary structure comprises 416 residues: MFDRKLTLDKVDPDLWAAIQKEDERQEQHIELIASENYASPAVMQAQGTQLTNKYAEGYPGKRYYGGCEYVDIVEQLAIDRLKELFGAEAANVQPNSGSQANQGVYMAVLKPGDTVLGMSLAEGGHLTHGASVNASGKLYNFLSYGLDENEVLNYAQVEALAREHKPKLIVAGASAYALHIDFERMARIARENGALFMVDIAHYAGLVAGGQYPNPVPHADFVTSTTHKSLRGPRGGVIMMKAQHEKAVNSAIFPGIQGGPLEHVIAAKAVAFKEALSPEFKDYASQVVKNAKVLAETLVKRGLRIVSGRTESHVMLVDLRAKGITGKEAEAVLGKAHITVNKNAIPNDPEKPFVTSGIRLGTPAMTTRGFKEAEAELTGNLIADVLENPHDEANIAAVRAKVNELTSRLPVYSAK.

(6S)-5,6,7,8-tetrahydrofolate-binding positions include L121 and G125–L127. K229 is subject to N6-(pyridoxal phosphate)lysine.

The protein belongs to the SHMT family. In terms of assembly, homodimer. It depends on pyridoxal 5'-phosphate as a cofactor.

The protein localises to the cytoplasm. The catalysed reaction is (6R)-5,10-methylene-5,6,7,8-tetrahydrofolate + glycine + H2O = (6S)-5,6,7,8-tetrahydrofolate + L-serine. It functions in the pathway one-carbon metabolism; tetrahydrofolate interconversion. It participates in amino-acid biosynthesis; glycine biosynthesis; glycine from L-serine: step 1/1. Functionally, catalyzes the reversible interconversion of serine and glycine with tetrahydrofolate (THF) serving as the one-carbon carrier. This reaction serves as the major source of one-carbon groups required for the biosynthesis of purines, thymidylate, methionine, and other important biomolecules. Also exhibits THF-independent aldolase activity toward beta-hydroxyamino acids, producing glycine and aldehydes, via a retro-aldol mechanism. The protein is Serine hydroxymethyltransferase of Bordetella avium (strain 197N).